Reading from the N-terminus, the 332-residue chain is 2,3-diketo-L-gulonate reductase (332 aa).

H44 functions as the Proton donor in the catalytic mechanism. NAD(+) is bound by residues 168–174, 224–225, and 304–306; these read ITMVDMS, WK, and GHE.

Belongs to the LDH2/MDH2 oxidoreductase family. DlgD subfamily. In terms of assembly, homodimer.

Its subcellular location is the cytoplasm. It catalyses the reaction 3-dehydro-L-gulonate + NAD(+) = 2,3-dioxo-L-gulonate + NADH + H(+). The enzyme catalyses 3-dehydro-L-gulonate + NADP(+) = 2,3-dioxo-L-gulonate + NADPH + H(+). Its function is as follows. Catalyzes the reduction of 2,3-diketo-L-gulonate in the presence of NADH, to form 3-keto-L-gulonate. The sequence is that of 2,3-diketo-L-gulonate reductase from Klebsiella pneumoniae (strain 342).